A 103-amino-acid polypeptide reads, in one-letter code: Pyrimidine/purine nucleoside phosphorylase (103 aa).

The protein belongs to the nucleoside phosphorylase PpnP family.

The enzyme catalyses a purine D-ribonucleoside + phosphate = a purine nucleobase + alpha-D-ribose 1-phosphate. It carries out the reaction adenosine + phosphate = alpha-D-ribose 1-phosphate + adenine. It catalyses the reaction cytidine + phosphate = cytosine + alpha-D-ribose 1-phosphate. The catalysed reaction is guanosine + phosphate = alpha-D-ribose 1-phosphate + guanine. The enzyme catalyses inosine + phosphate = alpha-D-ribose 1-phosphate + hypoxanthine. It carries out the reaction thymidine + phosphate = 2-deoxy-alpha-D-ribose 1-phosphate + thymine. It catalyses the reaction uridine + phosphate = alpha-D-ribose 1-phosphate + uracil. The catalysed reaction is xanthosine + phosphate = alpha-D-ribose 1-phosphate + xanthine. Catalyzes the phosphorolysis of diverse nucleosides, yielding D-ribose 1-phosphate and the respective free bases. Can use uridine, adenosine, guanosine, cytidine, thymidine, inosine and xanthosine as substrates. Also catalyzes the reverse reactions. In Geobacter sp. (strain M21), this protein is Pyrimidine/purine nucleoside phosphorylase.